A 272-amino-acid polypeptide reads, in one-letter code: 2-succinyl-6-hydroxy-2,4-cyclohexadiene-1-carboxylate synthase (272 aa).

This sequence belongs to the AB hydrolase superfamily. MenH family. In terms of assembly, monomer.

It catalyses the reaction 5-enolpyruvoyl-6-hydroxy-2-succinyl-cyclohex-3-ene-1-carboxylate = (1R,6R)-6-hydroxy-2-succinyl-cyclohexa-2,4-diene-1-carboxylate + pyruvate. It functions in the pathway quinol/quinone metabolism; 1,4-dihydroxy-2-naphthoate biosynthesis; 1,4-dihydroxy-2-naphthoate from chorismate: step 3/7. The protein operates within quinol/quinone metabolism; menaquinone biosynthesis. Functionally, catalyzes a proton abstraction reaction that results in 2,5-elimination of pyruvate from 2-succinyl-5-enolpyruvyl-6-hydroxy-3-cyclohexene-1-carboxylate (SEPHCHC) and the formation of 2-succinyl-6-hydroxy-2,4-cyclohexadiene-1-carboxylate (SHCHC). The protein is 2-succinyl-6-hydroxy-2,4-cyclohexadiene-1-carboxylate synthase of Yersinia pseudotuberculosis serotype O:1b (strain IP 31758).